Consider the following 464-residue polypeptide: Gamma-aminobutyric acid receptor subunit alpha-5 (464 aa).

The signal sequence occupies residues 1–25 (MDNGMLSRFIMTKTLLVFCISMTLS). Topologically, residues 26–260 (SHFGFSQMPT…FHLKRKIGYF (235 aa)) are extracellular. A glycan (N-linked (GlcNAc...) asparagine) is linked at asparagine 45. Arginine 101 provides a ligand contact to 4-aminobutanoate. Asparagine 145 carries an N-linked (GlcNAc...) asparagine glycan. Threonine 164 contributes to the 4-aminobutanoate binding site. Cysteine 173 and cysteine 187 are disulfide-bonded. 2 N-linked (GlcNAc...) asparagine glycosylation sites follow: asparagine 207 and asparagine 236. Transmembrane regions (helical) follow at residues 261 to 281 (VIQTYLPCIMTVILSQVSFWL), 287 to 308 (PARTVFGVTTVLTMTTLSISAR), and 319 to 340 (AMDWFIAVCYAFVFSALIEFAT). Residues 341 to 429 (VNYFTKRGWA…TYNSISKIDK (89 aa)) are Cytoplasmic-facing. Lysine 355 participates in a covalent cross-link: Glycyl lysine isopeptide (Lys-Gly) (interchain with G-Cter in ubiquitin). The segment at 382–414 (KLTHPPNIPKEQLPGGTGNAVGTASIRASEEKT) is disordered. Residues 430–450 (MSRIVFPILFGTFNLVYWATY) form a helical membrane-spanning segment.

Belongs to the ligand-gated ion channel (TC 1.A.9) family. Gamma-aminobutyric acid receptor (TC 1.A.9.5) subfamily. GABRA5 sub-subfamily. In terms of assembly, heteropentamer, formed by a combination of alpha (GABRA1-6), beta (GABRB1-3), gamma (GABRG1-3), delta (GABRD), epsilon (GABRE), rho (GABRR1-3), pi (GABRP) and theta (GABRQ) chains, each subunit exhibiting distinct physiological and pharmacological properties. Expressed in brain areas such as cerebral cortex, hippocampal formation and olfactory bulb granular layer.

The protein resides in the postsynaptic cell membrane. The protein localises to the cell membrane. It catalyses the reaction chloride(in) = chloride(out). Its activity is regulated as follows. Allosterically potentiated by alphaxalone. Allosterically inhibited by pregnenolone sulfate. Inhibited by zinc and lanthanum. Functionally, alpha subunit of the heteropentameric ligand-gated chloride channel gated by gamma-aminobutyric acid (GABA), a major inhibitory neurotransmitter in the brain. GABA-gated chloride channels, also named GABA(A) receptors (GABAAR), consist of five subunits arranged around a central pore and contain GABA active binding site(s) located at the alpha and beta subunit interface(s). When activated by GABA, GABAARs selectively allow the flow of chloride anions across the cell membrane down their electrochemical gradient. GABAARs containing alpha-5/GABRA5 subunits are mainly extrasynaptic and contribute to the tonic GABAergic inhibition in the hippocampus. Extrasynaptic alpha-5-containing GABAARs in CA1 pyramidal neurons play a role in learning and memory processes. The polypeptide is Gamma-aminobutyric acid receptor subunit alpha-5 (Rattus norvegicus (Rat)).